The following is an 888-amino-acid chain: Isoleucine--tRNA ligase (888 aa).

Positions 61–71 match the 'HIGH' region motif; sequence PYANGSIHIGH. An L-isoleucyl-5'-AMP-binding site is contributed by glutamate 551. The 'KMSKS' region signature appears at 592-596; the sequence is KMSKQ. Lysine 595 contributes to the ATP binding site. The Zn(2+) site is built by cysteine 862, cysteine 865, cysteine 879, and cysteine 882.

It belongs to the class-I aminoacyl-tRNA synthetase family. IleS type 1 subfamily. As to quaternary structure, monomer. The cofactor is Zn(2+).

Its subcellular location is the cytoplasm. The enzyme catalyses tRNA(Ile) + L-isoleucine + ATP = L-isoleucyl-tRNA(Ile) + AMP + diphosphate. Its function is as follows. Catalyzes the attachment of isoleucine to tRNA(Ile). As IleRS can inadvertently accommodate and process structurally similar amino acids such as valine, to avoid such errors it has two additional distinct tRNA(Ile)-dependent editing activities. One activity is designated as 'pretransfer' editing and involves the hydrolysis of activated Val-AMP. The other activity is designated 'posttransfer' editing and involves deacylation of mischarged Val-tRNA(Ile). In Mycoplasmopsis pulmonis (strain UAB CTIP) (Mycoplasma pulmonis), this protein is Isoleucine--tRNA ligase.